Here is a 155-residue protein sequence, read N- to C-terminus: MPKGEGKVIAQNKKARHDYFIEETYEAGLVLQGTEIKSIRNGRVNLKDSFAKVEKGEVFLHNMHISPYEQGNRYNHDPLRTRKLLLHRREINKLIGYTKEQGYTLVPLKLYIKNGFAKVELGVAKGKKKYDKREDMKRKEAQREIERAFRERQKI.

Belongs to the SmpB family.

It localises to the cytoplasm. Required for rescue of stalled ribosomes mediated by trans-translation. Binds to transfer-messenger RNA (tmRNA), required for stable association of tmRNA with ribosomes. tmRNA and SmpB together mimic tRNA shape, replacing the anticodon stem-loop with SmpB. tmRNA is encoded by the ssrA gene; the 2 termini fold to resemble tRNA(Ala) and it encodes a 'tag peptide', a short internal open reading frame. During trans-translation Ala-aminoacylated tmRNA acts like a tRNA, entering the A-site of stalled ribosomes, displacing the stalled mRNA. The ribosome then switches to translate the ORF on the tmRNA; the nascent peptide is terminated with the 'tag peptide' encoded by the tmRNA and targeted for degradation. The ribosome is freed to recommence translation, which seems to be the essential function of trans-translation. In Geobacillus thermodenitrificans (strain NG80-2), this protein is SsrA-binding protein.